We begin with the raw amino-acid sequence, 408 residues long: DNA-directed RNA polymerase subunit Rpo1C (408 aa).

It belongs to the RNA polymerase beta' chain family. In terms of assembly, part of the RNA polymerase complex.

Its subcellular location is the cytoplasm. It carries out the reaction RNA(n) + a ribonucleoside 5'-triphosphate = RNA(n+1) + diphosphate. DNA-dependent RNA polymerase (RNAP) catalyzes the transcription of DNA into RNA using the four ribonucleoside triphosphates as substrates. Forms part of the jaw domain. This is DNA-directed RNA polymerase subunit Rpo1C from Methanosarcina mazei (strain ATCC BAA-159 / DSM 3647 / Goe1 / Go1 / JCM 11833 / OCM 88) (Methanosarcina frisia).